The chain runs to 220 residues: MSSANTNTSSAPDAPPRAVMKVAVLAESELGSEAQRERRKRILDATMAIASKGGYEAVQMRAVADRADVAVGTLYRYFPSKVHLLVSALGREFSRIDAKTDRSAVAGATPFQRLNFMVGKLNRAMQRNPLLTEAMTRAYVFADASAASEVDQVEKLIDSMFARAMANGEPTEDQYHIARVISDVWLSNLLAWLTRRASATDVSKRLDLAVRLLIGDQDSA.

Residues 36-96 (RERRKRILDA…SALGREFSRI (61 aa)) enclose the HTH tetR-type domain. The segment at residues 59–78 (QMRAVADRADVAVGTLYRYF) is a DNA-binding region (H-T-H motif).

As to quaternary structure, homodimer.

Its function is as follows. Controls the expression of genes used for utilizing diverse lipids as energy sources. The protein is HTH-type transcriptional repressor KstR (kstR) of Mycobacterium tuberculosis (strain ATCC 25618 / H37Rv).